We begin with the raw amino-acid sequence, 316 residues long: Endochitinase 2 (316 aa).

The first 18 residues, 1-18 (EFTTLFLLFSVLLLSASA), serve as a signal peptide directing secretion. Residues 19–60 (EQCGSQAGGALCASGLCCSKFGWCGNTNDYCGPGNCQSQCPG) enclose the Chitin-binding type-1 domain. Cystine bridges form between C21-C36, C30-C42, C35-C49, C54-C58, C87-C150, C162-C170, and C269-C301. Residue E132 is the Proton donor of the active site. A propeptide spans 310–316 (GLLVDTV) (removed in mature form, vacuolar targeting).

This sequence belongs to the glycosyl hydrolase 19 family. Chitinase class I subfamily.

The protein resides in the vacuole. It catalyses the reaction Random endo-hydrolysis of N-acetyl-beta-D-glucosaminide (1-&gt;4)-beta-linkages in chitin and chitodextrins.. In terms of biological role, defense against chitin-containing fungal pathogens. This Solanum tuberosum (Potato) protein is Endochitinase 2 (CHTB2).